A 335-amino-acid chain; its full sequence is NADH-quinone oxidoreductase subunit H (335 aa).

A run of 8 helical transmembrane segments spans residues isoleucine 12–leucine 32, valine 81–isoleucine 101, isoleucine 114–glycine 134, valine 154–phenylalanine 174, leucine 187–valine 207, phenylalanine 238–phenylalanine 258, serine 270–leucine 290, and tryptophan 307–leucine 327.

Belongs to the complex I subunit 1 family. NDH-1 is composed of 13 different subunits. Subunits NuoA, H, J, K, L, M, N constitute the membrane sector of the complex.

Its subcellular location is the cell inner membrane. The enzyme catalyses a quinone + NADH + 5 H(+)(in) = a quinol + NAD(+) + 4 H(+)(out). NDH-1 shuttles electrons from NADH, via FMN and iron-sulfur (Fe-S) centers, to quinones in the respiratory chain. The immediate electron acceptor for the enzyme in this species is believed to be ubiquinone. Couples the redox reaction to proton translocation (for every two electrons transferred, four hydrogen ions are translocated across the cytoplasmic membrane), and thus conserves the redox energy in a proton gradient. This subunit may bind ubiquinone. The chain is NADH-quinone oxidoreductase subunit H from Pseudomonas syringae pv. syringae (strain B728a).